A 971-amino-acid polypeptide reads, in one-letter code: DNA-directed RNA polymerase subunit Rpo1N (971 aa).

Residue M1 is modified to Blocked amino end (Met). The Zn(2+) site is built by C62, C65, C72, H75, C102, C105, C149, and C152. Residues 185 to 204 (SMQPDEDEDDAGVSPQELAE) form a disordered region. Residues D527, D529, and D531 each contribute to the Mg(2+) site. A disordered region spans residues 951-971 (VEEPPTNLSEHGAAWEVESDD).

The protein belongs to the RNA polymerase beta' chain family. As to quaternary structure, part of the RNA polymerase complex. Requires Mg(2+) as cofactor. It depends on Zn(2+) as a cofactor. In terms of processing, the N-terminus is blocked.

It localises to the cytoplasm. The catalysed reaction is RNA(n) + a ribonucleoside 5'-triphosphate = RNA(n+1) + diphosphate. Functionally, DNA-dependent RNA polymerase (RNAP) catalyzes the transcription of DNA into RNA using the four ribonucleoside triphosphates as substrates. Forms the clamp head domain. This is DNA-directed RNA polymerase subunit Rpo1N from Halobacterium salinarum (strain ATCC 29341 / DSM 671 / R1).